Reading from the N-terminus, the 465-residue chain is Ribulose bisphosphate carboxylase large chain (465 aa).

Lys4 carries the post-translational modification N6,N6,N6-trimethyllysine. Asn113 and Thr163 together coordinate substrate. Residue Lys165 is the Proton acceptor of the active site. Residue Lys167 participates in substrate binding. The Mg(2+) site is built by Lys191, Asp193, and Glu194. Lys191 carries the N6-carboxylysine modification. His284 (proton acceptor) is an active-site residue. Substrate is bound by residues Arg285, His317, and Ser369.

The protein belongs to the RuBisCO large chain family. Type I subfamily. As to quaternary structure, heterohexadecamer of 8 large chains and 8 small chains; disulfide-linked. The disulfide link is formed within the large subunit homodimers. Requires Mg(2+) as cofactor. Post-translationally, the disulfide bond which can form in the large chain dimeric partners within the hexadecamer appears to be associated with oxidative stress and protein turnover.

It is found in the plastid. The protein localises to the chloroplast. It catalyses the reaction 2 (2R)-3-phosphoglycerate + 2 H(+) = D-ribulose 1,5-bisphosphate + CO2 + H2O. The catalysed reaction is D-ribulose 1,5-bisphosphate + O2 = 2-phosphoglycolate + (2R)-3-phosphoglycerate + 2 H(+). Its function is as follows. RuBisCO catalyzes two reactions: the carboxylation of D-ribulose 1,5-bisphosphate, the primary event in carbon dioxide fixation, as well as the oxidative fragmentation of the pentose substrate in the photorespiration process. Both reactions occur simultaneously and in competition at the same active site. The chain is Ribulose bisphosphate carboxylase large chain from Ulmus alata (Winged elm).